The following is a 339-amino-acid chain: DNA-directed RNA polymerase subunit alpha (339 aa).

The interval 1-235 (MVIQKNWQEL…DQLQIFVNFE (235 aa)) is alpha N-terminal domain (alpha-NTD). An alpha C-terminal domain (alpha-CTD) region spans residues 251-339 (FNPALLKKVD…DLAKRFEEHY (89 aa)).

It belongs to the RNA polymerase alpha chain family. As to quaternary structure, homodimer. The RNAP catalytic core consists of 2 alpha, 1 beta, 1 beta' and 1 omega subunit. When a sigma factor is associated with the core the holoenzyme is formed, which can initiate transcription.

The enzyme catalyses RNA(n) + a ribonucleoside 5'-triphosphate = RNA(n+1) + diphosphate. DNA-dependent RNA polymerase catalyzes the transcription of DNA into RNA using the four ribonucleoside triphosphates as substrates. The protein is DNA-directed RNA polymerase subunit alpha of Methylobacterium nodulans (strain LMG 21967 / CNCM I-2342 / ORS 2060).